A 195-amino-acid polypeptide reads, in one-letter code: Imidazoleglycerol-phosphate dehydratase (195 aa).

It belongs to the imidazoleglycerol-phosphate dehydratase family.

The protein resides in the cytoplasm. It catalyses the reaction D-erythro-1-(imidazol-4-yl)glycerol 3-phosphate = 3-(imidazol-4-yl)-2-oxopropyl phosphate + H2O. Its pathway is amino-acid biosynthesis; L-histidine biosynthesis; L-histidine from 5-phospho-alpha-D-ribose 1-diphosphate: step 6/9. The polypeptide is Imidazoleglycerol-phosphate dehydratase (Methylorubrum populi (strain ATCC BAA-705 / NCIMB 13946 / BJ001) (Methylobacterium populi)).